We begin with the raw amino-acid sequence, 319 residues long: tRNA dimethylallyltransferase (319 aa).

15–22 (GPTASGKS) is a binding site for ATP. 17-22 (TASGKS) lines the substrate pocket. Interaction with substrate tRNA regions lie at residues 40–43 (DSRQ) and 164–168 (QRLVR).

Belongs to the IPP transferase family. As to quaternary structure, monomer. Requires Mg(2+) as cofactor.

It catalyses the reaction adenosine(37) in tRNA + dimethylallyl diphosphate = N(6)-dimethylallyladenosine(37) in tRNA + diphosphate. Functionally, catalyzes the transfer of a dimethylallyl group onto the adenine at position 37 in tRNAs that read codons beginning with uridine, leading to the formation of N6-(dimethylallyl)adenosine (i(6)A). This is tRNA dimethylallyltransferase from Chlorobium phaeobacteroides (strain DSM 266 / SMG 266 / 2430).